We begin with the raw amino-acid sequence, 275 residues long: Sororin-B (275 aa).

A compositionally biased stretch (basic and acidic residues) spans 1–16; the sequence is MSERKKRGSSDADSRR. Disordered regions lie at residues 1–42 and 63–117; these read MSER…PAPI and NTGS…EIDV. Composition is skewed to polar residues over residues 63–76 and 93–112; these read NTGS…SNVT and NAFS…QSSA. Positions 91-93 match the KEN box motif; sequence KEN. The FGF motif signature appears at 186-188; that stretch reads FGF. The segment at 253-275 is C-terminal Sororin domain; sequence VDEWAAIMNAEFDEAEKFDLTVE.

This sequence belongs to the sororin family. In terms of assembly, interacts with the APC/C complex. Interacts with the chromatin-bound cohesin complex; the interaction is indirect, occurs after DNA replication and requires acetylation of the cohesin component smc3. Interacts (via the FGF motif) with pds5a and pds5b; the interaction is direct and prevents the interaction of pds5a with wapl. Post-translationally, ubiquitinated by the APC/C complex in G1, leading to its degradation.

It is found in the nucleus. The protein resides in the chromosome. The protein localises to the cytoplasm. Functionally, regulator of sister chromatid cohesion in mitosis stabilizing cohesin complex association with chromatin. May antagonize the action of wapl which stimulates cohesin dissociation from chromatin. Cohesion ensures that chromosome partitioning is accurate in both meiotic and mitotic cells and plays an important role in DNA repair. Required for efficient DNA double-stranded break repair. The sequence is that of Sororin-B (cdca5-b) from Xenopus laevis (African clawed frog).